A 61-amino-acid polypeptide reads, in one-letter code: Metallothionein-2B (61 aa).

Methionine 1 bears the N-acetylmethionine mark. The beta stretch occupies residues 1–29 (MDPNCSCAAGGSCTCAGSCKCKDCRCTSC). 20 residues coordinate a divalent metal cation: cysteine 5, cysteine 7, cysteine 13, cysteine 15, cysteine 19, cysteine 21, cysteine 24, cysteine 26, cysteine 29, cysteine 33, cysteine 34, cysteine 36, cysteine 37, cysteine 41, cysteine 44, cysteine 48, cysteine 50, cysteine 57, cysteine 59, and cysteine 60. Positions 30–61 (KKSCCSCCPAGCARCAQGCICKGASDKCSCCA) are alpha.

Belongs to the metallothionein superfamily. Type 1 family. Monomer.

In terms of biological role, metallothioneins have a high content of cysteine residues that bind various heavy metals; these proteins are transcriptionally regulated by both heavy metals and glucocorticoids. The chain is Metallothionein-2B (MT2B) from Sus scrofa (Pig).